The sequence spans 206 residues: Ribonuclease HII (206 aa).

Residues 19 to 206 form the RNase H type-2 domain; sequence ALIAGVDEVG…GPVKRALGIE (188 aa). The a divalent metal cation site is built by aspartate 25, glutamate 26, and aspartate 117.

It belongs to the RNase HII family. It depends on Mn(2+) as a cofactor. Mg(2+) serves as cofactor.

It is found in the cytoplasm. It catalyses the reaction Endonucleolytic cleavage to 5'-phosphomonoester.. Its function is as follows. Endonuclease that specifically degrades the RNA of RNA-DNA hybrids. This chain is Ribonuclease HII, found in Vibrio cholerae serotype O1 (strain M66-2).